We begin with the raw amino-acid sequence, 178 residues long: Ribosome maturation factor RimM (178 aa).

The 74-residue stretch at 104–177 (SDEYYFYEVI…KIVVKLPEWL (74 aa)) folds into the PRC barrel domain.

It belongs to the RimM family. Binds ribosomal protein uS19.

The protein resides in the cytoplasm. An accessory protein needed during the final step in the assembly of 30S ribosomal subunit, possibly for assembly of the head region. Essential for efficient processing of 16S rRNA. May be needed both before and after RbfA during the maturation of 16S rRNA. It has affinity for free ribosomal 30S subunits but not for 70S ribosomes. This Thermosipho melanesiensis (strain DSM 12029 / CIP 104789 / BI429) protein is Ribosome maturation factor RimM.